The primary structure comprises 118 residues: Basic phospholipase A2 CM-III (118 aa).

Intrachain disulfides connect C11/C70, C26/C117, C28/C44, C43/C98, C50/C91, C59/C84, and C77/C89. Ca(2+) is bound by residues Y27, G29, and G31. Residue H47 is part of the active site. D48 is a binding site for Ca(2+). The Coagulation factor Xa binding motif motif lies at 52 to 69 (EKAGKMGCWPYFTLYKYK). D92 is an active-site residue.

The protein belongs to the phospholipase A2 family. Group I subfamily. D49 sub-subfamily. It depends on Ca(2+) as a cofactor. As to expression, expressed by the venom gland.

The protein resides in the secreted. The enzyme catalyses a 1,2-diacyl-sn-glycero-3-phosphocholine + H2O = a 1-acyl-sn-glycero-3-phosphocholine + a fatty acid + H(+). Its function is as follows. Snake venom phospholipase A2 (PLA2) that shows several activities. It shows strong anticoagulant activity, probably by binding to coagulation factor Xa (F10) and inhibiting the formation of the prothrombinase complex, shows direct hemolytic action, causes neuromuscular blockade with a gradual contracture and a decreased sensitivity to ACh and KCl, abolishes twitches evoked by indirect stimulation earlier than those by direct stimulation (in the mouse phrenic nerve-diaphragm preparation), and causes myonecrosis when injected intramuscularly. PLA2 catalyzes the calcium-dependent hydrolysis of the 2-acyl groups in 3-sn-phosphoglycerides. This Naja mossambica (Mozambique spitting cobra) protein is Basic phospholipase A2 CM-III.